The following is a 27-amino-acid chain: DELTA-pseudomyrmecitoxin-Pp1a subunit A (27 aa).

As to quaternary structure, heterodimer composed of subunit A and subunit B (DELTA-PSDTX-Pp1a); disulfide-linked. Expressed by the venom gland.

Its subcellular location is the secreted. This heterodimer has insecticidal and cytotoxic properties. Induces immediate paralysis when injected into blowflies (Lucilia cuprina), and then death within 24 hours. Also inhibits the growth of Aedes albopictus mosquito C6/36 cells. The chain is DELTA-pseudomyrmecitoxin-Pp1a subunit A from Pseudomyrmex penetrator (Ant).